We begin with the raw amino-acid sequence, 653 residues long: MSTEEDQKLFLSIGLDEKRAKDTLKNKDLTALLKTIIEEASVSKGCDKSIGNLLYSLATCQQVNSPIRSNVSKAIGEEKIKTTIQFQAATQYLKDNKEFNQDTFNDFCGVGVVITPEQIQKAIDDLFTKKATEISEKKWHIPIGDLLNPLKESLKWADLKEVKIMLDKKLETTLGPKVVEAKEKKVAATTTAPVKKIEEQLAAITLKQDASLPTPKRLKIRECSPKFANQRVEVHAWAHHVRNQKKIVFLELRDGTGFLQCVLSGDLVHPSIIDKLLREATVKIVGTLVIPPADKKCPGGVELQADYWELLGPSNADLEGVINQESNVDHLFDQRHIMMRGTRASSIMKIRSLCLFAFRQHFFENHYMEVTPPTLVNTYCEGGSELFTVDYFGKPAYLTQSSQLYLETMLPVLGDNFTITQSYRAEKARTRRHLTEFLHLEAECPFITYEELQDRIEFLVVDVCEKLFKMDPELILSVNPDFKVPKRPFMRMNYSDAIEYCKKNGIQKKLEDGTEVDFEFGDDIPEAQERRMNDQIGEPIFLCRFPAEMKAFYMARCPEDRTLTESLDLLMPGVGEIVGGSMRISDFNELVAAYKKAGLDTDEYYWFTDQRKYGTTQHGGYGLGVERFLTWMLKEEHIRNVCVYQRTKDRITP.

It belongs to the class-II aminoacyl-tRNA synthetase family.

The protein resides in the cytoplasm. The enzyme catalyses tRNA(Asn) + L-asparagine + ATP = L-asparaginyl-tRNA(Asn) + AMP + diphosphate + H(+). This chain is Asparagine--tRNA ligase, cytoplasmic (asnS1), found in Dictyostelium discoideum (Social amoeba).